The chain runs to 480 residues: MNYLNETIDSLNDKLKSGAVSADQLAKDTIANIKKTDEKINAFITVDEDAKPAEDLDFNNKLAGVPIAIKDNIITNGLKTTAASHILYNFEPVYESTVVAKLKAAQATIIGKTNMDEFAMGSSTETSYFGDTKNPWNLNKVPGGSSGGSAAAVASGEVVAALGSDTGGSIRQPASFNGIFGIKPTYGRVSRWGLIAFASSLDQIGVMSKRVKDSAEVLNVIAGADDRDATVSEKEVPDYTSFLDKDVKGLRVAVPKEYMSDAVEEGVRKAVEAQIELLRANGAIINEVSLPHTKYVVPTYYIIASSEASANLERYDGIRYGYRAEAKNLDEVFLKSRSEGFGDEVKRRIMLGSFALSAGAYDKFFLQAAKVRTLICQDFDKIFEDNDVIVGPVSTETAFDLNSEISDQIKMYNNDILTISANMAGIPAASVPAGLSETTGMPVGFQIMAKRFDEGHVFQVADFIERSNKFYEQTPAGLED.

Residues Lys70 and Ser145 each act as charge relay system in the active site. The active-site Acyl-ester intermediate is the Ser169.

This sequence belongs to the amidase family. GatA subfamily. In terms of assembly, heterotrimer of A, B and C subunits.

It catalyses the reaction L-glutamyl-tRNA(Gln) + L-glutamine + ATP + H2O = L-glutaminyl-tRNA(Gln) + L-glutamate + ADP + phosphate + H(+). Allows the formation of correctly charged Gln-tRNA(Gln) through the transamidation of misacylated Glu-tRNA(Gln) in organisms which lack glutaminyl-tRNA synthetase. The reaction takes place in the presence of glutamine and ATP through an activated gamma-phospho-Glu-tRNA(Gln). This Lactobacillus delbrueckii subsp. bulgaricus (strain ATCC BAA-365 / Lb-18) protein is Glutamyl-tRNA(Gln) amidotransferase subunit A.